Here is a 98-residue protein sequence, read N- to C-terminus: Ferredoxin-like protein (98 aa).

The protein to ferredoxins from P.putida and C.tartarivorum, ferredoxin I from A.vinelandii, ferredoxin II from D.desulfuricans.

Could be a 3Fe-4S cluster-containing protein. The polypeptide is Ferredoxin-like protein (fixX) (Rhizobium leguminosarum bv. trifolii).